We begin with the raw amino-acid sequence, 110 residues long: Nucleoid-associated protein KPK_4227 (110 aa).

Residues Met-1 to Met-22 are disordered.

The protein belongs to the YbaB/EbfC family. As to quaternary structure, homodimer.

The protein localises to the cytoplasm. It localises to the nucleoid. In terms of biological role, binds to DNA and alters its conformation. May be involved in regulation of gene expression, nucleoid organization and DNA protection. The sequence is that of Nucleoid-associated protein KPK_4227 from Klebsiella pneumoniae (strain 342).